We begin with the raw amino-acid sequence, 427 residues long: Serine hydroxymethyltransferase (427 aa).

(6S)-5,6,7,8-tetrahydrofolate is bound by residues Leu127 and 131-133 (GHL). Position 236 is an N6-(pyridoxal phosphate)lysine (Lys236).

Belongs to the SHMT family. As to quaternary structure, homodimer. The cofactor is pyridoxal 5'-phosphate.

It localises to the cytoplasm. The catalysed reaction is (6R)-5,10-methylene-5,6,7,8-tetrahydrofolate + glycine + H2O = (6S)-5,6,7,8-tetrahydrofolate + L-serine. The protein operates within one-carbon metabolism; tetrahydrofolate interconversion. Its pathway is amino-acid biosynthesis; glycine biosynthesis; glycine from L-serine: step 1/1. In terms of biological role, catalyzes the reversible interconversion of serine and glycine with tetrahydrofolate (THF) serving as the one-carbon carrier. This reaction serves as the major source of one-carbon groups required for the biosynthesis of purines, thymidylate, methionine, and other important biomolecules. Also exhibits THF-independent aldolase activity toward beta-hydroxyamino acids, producing glycine and aldehydes, via a retro-aldol mechanism. The sequence is that of Serine hydroxymethyltransferase from Paramagnetospirillum magneticum (strain ATCC 700264 / AMB-1) (Magnetospirillum magneticum).